The primary structure comprises 91 residues: Small ribosomal subunit protein uS19 (91 aa).

Belongs to the universal ribosomal protein uS19 family.

Protein S19 forms a complex with S13 that binds strongly to the 16S ribosomal RNA. This is Small ribosomal subunit protein uS19 from Dechloromonas aromatica (strain RCB).